The following is a 360-amino-acid chain: Photosystem II protein D1 1 (360 aa).

The next 3 membrane-spanning stretches (helical) occupy residues 29–46, 118–133, and 142–156; these read YVGW…SATI, HFLI…EWEL, and WICI…AAAA. His118 is a chlorophyll a binding site. Tyr126 lines the pheophytin a pocket. Residues Asp170 and Glu189 each coordinate [CaMn4O5] cluster. Residues 197–218 traverse the membrane as a helical segment; the sequence is FHMLGVAGVFGGSLFSAMHGSL. His198 contacts chlorophyll a. A quinone-binding positions include His215 and 264–265; that span reads SF. His215 serves as a coordination point for Fe cation. His272 contacts Fe cation. The helical transmembrane segment at 274 to 288 threads the bilayer; the sequence is FLAAWPVIGIWFTAL. Residues His332, Glu333, Asp342, and Ala344 each coordinate [CaMn4O5] cluster. The propeptide occupies 345–360; the sequence is GTESAPVAVGNADLNG.

The protein belongs to the reaction center PufL/M/PsbA/D family. As to quaternary structure, PSII is composed of 1 copy each of membrane proteins PsbA, PsbB, PsbC, PsbD, PsbE, PsbF, PsbH, PsbI, PsbJ, PsbK, PsbL, PsbM, PsbT, PsbX, Psb30/Ycf12, peripheral proteins PsbO, CyanoQ (PsbQ), PsbU, PsbV and a large number of cofactors. It forms dimeric complexes. The D1/D2 heterodimer binds P680, chlorophylls that are the primary electron donor of PSII, and subsequent electron acceptors. It shares a non-heme iron and each subunit binds pheophytin, quinone, additional chlorophylls, carotenoids and lipids. D1 provides most of the ligands for the Mn4-Ca-O5 cluster of the oxygen-evolving complex (OEC). There is also a Cl(-1) ion associated with D1 and D2, which is required for oxygen evolution. The PSII complex binds additional chlorophylls, carotenoids and specific lipids. serves as cofactor. Post-translationally, tyr-161 forms a radical intermediate that is referred to as redox-active TyrZ, YZ or Y-Z. C-terminally processed by CtpA; processing is essential to allow assembly of the oxygen-evolving complex and thus photosynthetic growth.

It is found in the cell inner membrane. The enzyme catalyses 2 a plastoquinone + 4 hnu + 2 H2O = 2 a plastoquinol + O2. Its function is as follows. Photosystem II (PSII) is a light-driven water:plastoquinone oxidoreductase that uses light energy to abstract electrons from H(2)O, generating O(2) and a proton gradient subsequently used for ATP formation. It consists of a core antenna complex that captures photons, and an electron transfer chain that converts photonic excitation into a charge separation. The D1/D2 (PsbA/PsbD) reaction center heterodimer binds P680, the primary electron donor of PSII as well as several subsequent electron acceptors. This chain is Photosystem II protein D1 1, found in Gloeobacter violaceus (strain ATCC 29082 / PCC 7421).